Consider the following 102-residue polypeptide: MALNEQDVARIARLARIELTPDQRGRAQAELNGILHLIERLQAVDTQGVEPLAHPLSAHEDITLRLREDAVSEQATEARRAELLANAPESADGLFLVPKVIE.

The protein belongs to the GatC family. Heterotrimer of A, B and C subunits.

It catalyses the reaction L-glutamyl-tRNA(Gln) + L-glutamine + ATP + H2O = L-glutaminyl-tRNA(Gln) + L-glutamate + ADP + phosphate + H(+). The catalysed reaction is L-aspartyl-tRNA(Asn) + L-glutamine + ATP + H2O = L-asparaginyl-tRNA(Asn) + L-glutamate + ADP + phosphate + 2 H(+). Its function is as follows. Allows the formation of correctly charged Asn-tRNA(Asn) or Gln-tRNA(Gln) through the transamidation of misacylated Asp-tRNA(Asn) or Glu-tRNA(Gln) in organisms which lack either or both of asparaginyl-tRNA or glutaminyl-tRNA synthetases. The reaction takes place in the presence of glutamine and ATP through an activated phospho-Asp-tRNA(Asn) or phospho-Glu-tRNA(Gln). This is Aspartyl/glutamyl-tRNA(Asn/Gln) amidotransferase subunit C from Bordetella pertussis (strain Tohama I / ATCC BAA-589 / NCTC 13251).